An 858-amino-acid polypeptide reads, in one-letter code: Neural cell adhesion molecule 1 (858 aa).

The first 19 residues, 1–19 (MLQTKDLIWTLFFLGTAVS), serve as a signal peptide directing secretion. Ig-like C2-type domains are found at residues 20–111 (LQVD…ATVN), 116–205 (QKLM…KDIQ), 212–301 (PTIQ…ATIH), 308–413 (PKIT…LEVQ), and 416–501 (PKLQ…ESLE). At 20–718 (LQVDIVPSQG…IPANGSPTSG (699 aa)) the chain is on the extracellular side. Intrachain disulfides connect Cys41–Cys96 and Cys139–Cys189. N-linked (GlcNAc...) asparagine glycosylation is present at Asn222. An intrachain disulfide couples Cys235 to Cys287. N-linked (GlcNAc...) asparagine glycosylation is found at Asn315, Asn347, Asn433, Asn459, and Asn488. A disulfide bridge links Cys329 with Cys395. A disulfide bond links Cys436 and Cys489. 2 consecutive Fibronectin type-III domains span residues 509 to 608 (TPSS…TQPV) and 611 to 706 (EPSA…SAQP). Pro706 is lipidated: GPI-anchor amidated asparagine. The chain crosses the membrane as a helical span at residues 719 to 739 (LSTGAIVGILIVIFVLLLVVV). Residues 740 to 858 (DITCYFLNKC…TQTKENESKA (119 aa)) are Cytoplasmic-facing. Ile741 carries GPI-anchor amidated asparagine lipidation. The disordered stretch occupies residues 766–858 (GAKGKDMEEG…TQTKENESKA (93 aa)). 2 stretches are compositionally biased toward basic and acidic residues: residues 768 to 809 (KGKD…HTEP) and 817 to 834 (EPEK…ETET). Phosphoserine occurs at positions 780 and 784.

In terms of assembly, (Microbial infection) Interacts with rabies virus glycoprotein. As to quaternary structure, (Microbial infection) Interacts with Zika virus envelope protein E. Interacts with MDK. Found in a complex with SLC39A6, SLC39A10 and with NCAM1; this complex controls NCAM1 phosphorylation and integration into focal adhesion complexes during epithelial-tomesenchymal transition. Interacts with synaptic plasticity regulator PANTS. Post-translationally, polysialylated at Asn-459 and Asn-488 by ST8SIA2 and ST8SIA4. Polysialylation modulates cell interactions by confering both attractive and repulsive properties that are highly regulated by ST8SIA2 and ST8SIA4. Polysialylation is formed on a-2,3-linked sialic acid of core glycans.

The protein localises to the cell membrane. The protein resides in the secreted. Functionally, this protein is a cell adhesion molecule involved in neuron-neuron adhesion, neurite fasciculation, outgrowth of neurites, etc. In terms of biological role, (Microbial infection) Acts as a receptor for rabies virus. (Microbial infection) Acts as a receptor for Zika virus. This Homo sapiens (Human) protein is Neural cell adhesion molecule 1.